Consider the following 349-residue polypeptide: Magnesium-protoporphyrin IX monomethyl ester [oxidative] cyclase (349 aa).

The protein belongs to the AcsF family. The cofactor is Fe cation.

It localises to the plastid. It is found in the chloroplast. It carries out the reaction Mg-protoporphyrin IX 13-monomethyl ester + 3 NADPH + 3 O2 + 2 H(+) = 3,8-divinyl protochlorophyllide a + 3 NADP(+) + 5 H2O. The protein operates within porphyrin-containing compound metabolism; chlorophyll biosynthesis (light-independent). Functionally, catalyzes the formation of the isocyclic ring in chlorophyll biosynthesis. Mediates the cyclase reaction, which results in the formation of divinylprotochlorophyllide (Pchlide) characteristic of all chlorophylls from magnesium-protoporphyrin IX 13-monomethyl ester (MgPMME). The polypeptide is Magnesium-protoporphyrin IX monomethyl ester [oxidative] cyclase (Pyropia yezoensis (Susabi-nori)).